Reading from the N-terminus, the 701-residue chain is Elongation factor G (701 aa).

The 283-residue stretch at 8–290 (KHYRNIGISA…AVIEYLPAPI (283 aa)) folds into the tr-type G domain. Residues 17–24 (AHIDAGKT), 88–92 (DTPGH), and 142–145 (NKMD) each bind GTP.

Belongs to the TRAFAC class translation factor GTPase superfamily. Classic translation factor GTPase family. EF-G/EF-2 subfamily.

The protein localises to the cytoplasm. Its function is as follows. Catalyzes the GTP-dependent ribosomal translocation step during translation elongation. During this step, the ribosome changes from the pre-translocational (PRE) to the post-translocational (POST) state as the newly formed A-site-bound peptidyl-tRNA and P-site-bound deacylated tRNA move to the P and E sites, respectively. Catalyzes the coordinated movement of the two tRNA molecules, the mRNA and conformational changes in the ribosome. The protein is Elongation factor G of Hamiltonella defensa subsp. Acyrthosiphon pisum (strain 5AT).